The chain runs to 667 residues: Receptor for retinol uptake STRA6 (667 aa).

A compositionally biased stretch (polar residues) spans Met1–Gly13. The disordered stretch occupies residues Met1–Tyr20. Topologically, residues Met1 to Gly50 are extracellular. Residue Asn8 is glycosylated (N-linked (GlcNAc...) asparagine). Residues Leu51–Val71 form a helical membrane-spanning segment. Topologically, residues Arg72–Arg100 are cytoplasmic. The chain crosses the membrane as a helical span at residues Ala101–Glu121. Residues Asp122 to Gly144 lie on the Extracellular side of the membrane. A helical membrane pass occupies residues Ala145–Ala165. At Thr166–Gly168 the chain is on the cytoplasmic side. Residues His169–Trp189 traverse the membrane as a helical segment. Topologically, residues Gln190–Ser205 are extracellular. Residues Leu206–Gln226 traverse the membrane as a helical segment. Topologically, residues Leu227–Lys295 are cytoplasmic. The interaction with RBP1 stretch occupies residues Thr235–Pro293. A helical membrane pass occupies residues Leu296 to Val316. At Gly317–Ile367 the chain is on the extracellular side. A helical membrane pass occupies residues Ser368–His388. Topologically, residues Arg389–Ser422 are cytoplasmic. Residues Phe423–Phe443 traverse the membrane as a helical segment. The Extracellular segment spans residues Leu444–Trp473. A helical membrane pass occupies residues Pro474–Phe494. Over Leu495 to Val509 the chain is Cytoplasmic. Positions Leu510–Met547 form an intramembrane region, helical. The Cytoplasmic portion of the chain corresponds to Asp548 to Pro667. Residue Tyr643 is modified to Phosphotyrosine.

As to quaternary structure, homodimer. Interacts with JAK2 and STAT5. Interacts (via extracellular domains) with RBP4. Interacts (via cytoplasmic domains) with RBP1. Post-translationally, phosphorylated on tyrosine residues in response to RBP4 binding. Phosphorylation requires the presence of LRAT, suggesting it may be triggered by the uptake of retinol that is then metabolized within the cell to retinoids that function as signaling molecules. In terms of tissue distribution, broad expression. In adult eye expressed in sclera, retina, retinal pigment epithelium, and trabecular meshwork but not in choroid and iris.

The protein resides in the cell membrane. Functions as a retinol transporter. Accepts all-trans retinol from the extracellular retinol-binding protein RBP4, facilitates retinol transport across the cell membrane, and then transfers retinol to the cytoplasmic retinol-binding protein RBP1. Retinol uptake is enhanced by LRAT, an enzyme that converts retinol to all-trans retinyl esters, the storage forms of vitamin A. Contributes to the activation of a signaling cascade that depends on retinol transport and LRAT-dependent generation of retinol metabolites that then trigger activation of JAK2 and its target STAT5, and ultimately increase the expression of SOCS3 and inhibit cellular responses to insulin. Important for the homeostasis of vitamin A and its derivatives, such as retinoic acid. STRA6-mediated transport is particularly important in the eye, and under conditions of dietary vitamin A deficiency. Does not transport retinoic acid. In Homo sapiens (Human), this protein is Receptor for retinol uptake STRA6 (STRA6).